Reading from the N-terminus, the 186-residue chain is Ribosome-recycling factor (186 aa).

This sequence belongs to the RRF family.

It is found in the cytoplasm. Functionally, responsible for the release of ribosomes from messenger RNA at the termination of protein biosynthesis. May increase the efficiency of translation by recycling ribosomes from one round of translation to another. This is Ribosome-recycling factor from Rickettsia bellii (strain OSU 85-389).